The sequence spans 313 residues: Ribosomal protein L11 methyltransferase (313 aa).

The S-adenosyl-L-methionine site is built by T164, G185, D207, and N249.

The protein belongs to the methyltransferase superfamily. PrmA family.

The protein resides in the cytoplasm. It catalyses the reaction L-lysyl-[protein] + 3 S-adenosyl-L-methionine = N(6),N(6),N(6)-trimethyl-L-lysyl-[protein] + 3 S-adenosyl-L-homocysteine + 3 H(+). Its function is as follows. Methylates ribosomal protein L11. The chain is Ribosomal protein L11 methyltransferase from Clostridium perfringens (strain ATCC 13124 / DSM 756 / JCM 1290 / NCIMB 6125 / NCTC 8237 / Type A).